A 191-amino-acid chain; its full sequence is uncharacterized protein (191 aa).

The region spanning 87-184 (EFDSALIFHY…RIAITFRQMG (98 aa)) is the Fe2OG dioxygenase domain.

This is an uncharacterized protein from Acanthamoeba polyphaga mimivirus (APMV).